The following is a 354-amino-acid chain: Methylthioribose-1-phosphate isomerase (354 aa).

Residues 48–50 (RGA), arginine 95, and glutamine 202 each bind substrate. Aspartate 243 functions as the Proton donor in the catalytic mechanism. 253–254 (NK) is a binding site for substrate.

This sequence belongs to the eIF-2B alpha/beta/delta subunits family. MtnA subfamily.

The catalysed reaction is 5-(methylsulfanyl)-alpha-D-ribose 1-phosphate = 5-(methylsulfanyl)-D-ribulose 1-phosphate. Its pathway is amino-acid biosynthesis; L-methionine biosynthesis via salvage pathway; L-methionine from S-methyl-5-thio-alpha-D-ribose 1-phosphate: step 1/6. Catalyzes the interconversion of methylthioribose-1-phosphate (MTR-1-P) into methylthioribulose-1-phosphate (MTRu-1-P). The sequence is that of Methylthioribose-1-phosphate isomerase from Roseiflexus castenholzii (strain DSM 13941 / HLO8).